A 550-amino-acid chain; its full sequence is Hydroxylamine reductase (550 aa).

Positions 3, 6, 18, and 25 each coordinate [2Fe-2S] cluster. Hybrid [4Fe-2O-2S] cluster is bound by residues His249, Glu273, Cys317, Cys405, Cys433, Cys458, Glu492, and Lys494. At Cys405 the chain carries Cysteine persulfide.

This sequence belongs to the HCP family. Requires [2Fe-2S] cluster as cofactor. Hybrid [4Fe-2O-2S] cluster serves as cofactor.

It is found in the cytoplasm. It carries out the reaction A + NH4(+) + H2O = hydroxylamine + AH2 + H(+). In terms of biological role, catalyzes the reduction of hydroxylamine to form NH(3) and H(2)O. The chain is Hydroxylamine reductase from Salmonella gallinarum (strain 287/91 / NCTC 13346).